Here is a 61-residue protein sequence, read N- to C-terminus: UPF0434 protein TM1040_0056 (61 aa).

It belongs to the UPF0434 family.

The chain is UPF0434 protein TM1040_0056 from Ruegeria sp. (strain TM1040) (Silicibacter sp.).